Here is a 329-residue protein sequence, read N- to C-terminus: Glycosyltransferase family protein 64 C3 (329 aa).

Positions 1–27 are cleaved as a signal peptide; sequence MGVKSVRFSIWFLFVVTDLVFCRTLSG. A glycan (N-linked (GlcNAc...) asparagine) is linked at Asn99. Substrate contacts are provided by residues 118-123, 139-141, Arg169, 226-230, and 271-284; these read SSLNAR, DDD, RNCED, and VGLS…RKRR. Mn(2+) is bound at residue Asp141. Residues Cys228 and Cys287 are joined by a disulfide bond. Residue Asp230 is part of the active site. Residues 268–284 form a substrate binding region; the sequence is VRDVGLSSRRVEHRKRR.

It belongs to the glycosyltransferase 64 family. The cofactor is Mn(2+).

The protein operates within protein modification; protein glycosylation. Probable glycosyltransferase. The polypeptide is Glycosyltransferase family protein 64 C3 (Arabidopsis thaliana (Mouse-ear cress)).